Reading from the N-terminus, the 284-residue chain is tRNA uridine(34) hydroxylase (284 aa).

One can recognise a Rhodanese domain in the interval 132–226 (AGRPVVMLDT…YFEEVGGAHY (95 aa)). Residue Cys186 is the Cysteine persulfide intermediate of the active site.

Belongs to the TrhO family.

The enzyme catalyses uridine(34) in tRNA + AH2 + O2 = 5-hydroxyuridine(34) in tRNA + A + H2O. Catalyzes oxygen-dependent 5-hydroxyuridine (ho5U) modification at position 34 in tRNAs. The sequence is that of tRNA uridine(34) hydroxylase from Burkholderia ambifaria (strain MC40-6).